The following is a 536-amino-acid chain: Membrane protein insertase YidC (536 aa).

Helical transmembrane passes span 5 to 25 (LIIA…IFPT), 353 to 373 (GNYG…FFPL), 418 to 438 (VNPL…FGLY), and 495 to 515 (MLML…GLVI).

Belongs to the OXA1/ALB3/YidC family. Type 1 subfamily. Interacts with the Sec translocase complex via SecD. Specifically interacts with transmembrane segments of nascent integral membrane proteins during membrane integration.

It localises to the cell inner membrane. In terms of biological role, required for the insertion and/or proper folding and/or complex formation of integral membrane proteins into the membrane. Involved in integration of membrane proteins that insert both dependently and independently of the Sec translocase complex, as well as at least some lipoproteins. Aids folding of multispanning membrane proteins. This chain is Membrane protein insertase YidC, found in Geobacter sp. (strain M21).